Here is a 734-residue protein sequence, read N- to C-terminus: Photosystem I P700 chlorophyll a apoprotein A2 (734 aa).

Helical transmembrane passes span Ile46–Ala69, Leu135–Gln158, Leu175–Ile199, Ile273–Tyr291, Ile330–Tyr353, Ala369–Ile395, Ala417–His439, and Phe517–Val535. 2 residues coordinate [4Fe-4S] cluster: Cys559 and Cys568. 2 helical membrane passes run Ala575–Trp596 and Leu643–Ile665. Chlorophyll a contacts are provided by His654, Met662, and Tyr670. Trp671 contributes to the phylloquinone binding site. A helical transmembrane segment spans residues Leu707–Ala727.

This sequence belongs to the PsaA/PsaB family. The PsaA/B heterodimer binds the P700 chlorophyll special pair and subsequent electron acceptors. PSI consists of a core antenna complex that captures photons, and an electron transfer chain that converts photonic excitation into a charge separation. The eukaryotic PSI reaction center is composed of at least 11 subunits. It depends on P700 is a chlorophyll a/chlorophyll a' dimer, A0 is one or more chlorophyll a, A1 is one or both phylloquinones and FX is a shared 4Fe-4S iron-sulfur center. as a cofactor.

It localises to the plastid. The protein localises to the chloroplast thylakoid membrane. It carries out the reaction reduced [plastocyanin] + hnu + oxidized [2Fe-2S]-[ferredoxin] = oxidized [plastocyanin] + reduced [2Fe-2S]-[ferredoxin]. Functionally, psaA and PsaB bind P700, the primary electron donor of photosystem I (PSI), as well as the electron acceptors A0, A1 and FX. PSI is a plastocyanin-ferredoxin oxidoreductase, converting photonic excitation into a charge separation, which transfers an electron from the donor P700 chlorophyll pair to the spectroscopically characterized acceptors A0, A1, FX, FA and FB in turn. Oxidized P700 is reduced on the lumenal side of the thylakoid membrane by plastocyanin. The polypeptide is Photosystem I P700 chlorophyll a apoprotein A2 (Aethionema cordifolium (Lebanon stonecress)).